The chain runs to 539 residues: Eukaryotic translation initiation factor 3 subunit L (539 aa).

Residues 306–514 enclose the PCI domain; sequence TFSDILLYIQ…IHIADTKVSH (209 aa).

Belongs to the eIF-3 subunit L family. In terms of assembly, component of the eukaryotic translation initiation factor 3 (eIF-3) complex. The eIF-3 complex interacts with pix.

It is found in the cytoplasm. In terms of biological role, component of the eukaryotic translation initiation factor 3 (eIF-3) complex, which is involved in protein synthesis of a specialized repertoire of mRNAs and, together with other initiation factors, stimulates binding of mRNA and methionyl-tRNAi to the 40S ribosome. The eIF-3 complex specifically targets and initiates translation of a subset of mRNAs involved in cell proliferation. This is Eukaryotic translation initiation factor 3 subunit L from Drosophila yakuba (Fruit fly).